The sequence spans 435 residues: 3-phosphoshikimate 1-carboxyvinyltransferase (435 aa).

Positions 15, 16, and 20 each coordinate 3-phosphoshikimate. Position 15 (Lys15) interacts with phosphoenolpyruvate. Residues Gly96 and Arg124 each contribute to the phosphoenolpyruvate site. Residues Ser169, Gln171, Ser195, Asp319, and Lys346 each coordinate 3-phosphoshikimate. Gln171 lines the phosphoenolpyruvate pocket. Asp319 serves as the catalytic Proton acceptor. 2 residues coordinate phosphoenolpyruvate: Arg350 and Arg395.

Belongs to the EPSP synthase family. In terms of assembly, monomer.

It is found in the cytoplasm. It carries out the reaction 3-phosphoshikimate + phosphoenolpyruvate = 5-O-(1-carboxyvinyl)-3-phosphoshikimate + phosphate. Its pathway is metabolic intermediate biosynthesis; chorismate biosynthesis; chorismate from D-erythrose 4-phosphate and phosphoenolpyruvate: step 6/7. Functionally, catalyzes the transfer of the enolpyruvyl moiety of phosphoenolpyruvate (PEP) to the 5-hydroxyl of shikimate-3-phosphate (S3P) to produce enolpyruvyl shikimate-3-phosphate and inorganic phosphate. In Chlorobium phaeobacteroides (strain BS1), this protein is 3-phosphoshikimate 1-carboxyvinyltransferase.